A 246-amino-acid chain; its full sequence is 2-C-methyl-D-erythritol 4-phosphate cytidylyltransferase (246 aa).

It belongs to the IspD/TarI cytidylyltransferase family. IspD subfamily.

The catalysed reaction is 2-C-methyl-D-erythritol 4-phosphate + CTP + H(+) = 4-CDP-2-C-methyl-D-erythritol + diphosphate. It participates in isoprenoid biosynthesis; isopentenyl diphosphate biosynthesis via DXP pathway; isopentenyl diphosphate from 1-deoxy-D-xylulose 5-phosphate: step 2/6. Its function is as follows. Catalyzes the formation of 4-diphosphocytidyl-2-C-methyl-D-erythritol from CTP and 2-C-methyl-D-erythritol 4-phosphate (MEP). This Chlorobaculum tepidum (strain ATCC 49652 / DSM 12025 / NBRC 103806 / TLS) (Chlorobium tepidum) protein is 2-C-methyl-D-erythritol 4-phosphate cytidylyltransferase.